The following is a 99-amino-acid chain: Acylphosphatase (99 aa).

The 93-residue stretch at 5 to 97 (IRQVMISGRV…QPGERFSILS (93 aa)) folds into the Acylphosphatase-like domain. Residues Arg20 and Asn38 contribute to the active site.

It belongs to the acylphosphatase family.

It carries out the reaction an acyl phosphate + H2O = a carboxylate + phosphate + H(+). The polypeptide is Acylphosphatase (acyP) (Rhodopseudomonas palustris (strain ATCC BAA-98 / CGA009)).